Reading from the N-terminus, the 154-residue chain is Large ribosomal subunit protein uL13 (154 aa).

It belongs to the universal ribosomal protein uL13 family. In terms of assembly, part of the 50S ribosomal subunit.

Its function is as follows. This protein is one of the early assembly proteins of the 50S ribosomal subunit, although it is not seen to bind rRNA by itself. It is important during the early stages of 50S assembly. The sequence is that of Large ribosomal subunit protein uL13 from Rhizobium rhizogenes (strain K84 / ATCC BAA-868) (Agrobacterium radiobacter).